The following is a 500-amino-acid chain: 4-aminobutyrate aminotransferase, mitochondrial (500 aa).

A mitochondrion-targeting transit peptide spans 1–27 (MAFLLTTRRLVCSSQKNLHLFTPGSRY). [2Fe-2S] cluster is bound at residue Cys163. Residue 164–165 (GS) coordinates pyridoxal 5'-phosphate. [2Fe-2S] cluster is bound at residue Cys166. A substrate-binding site is contributed by Arg220. At Lys231 the chain carries N6-succinyllysine. Residue Lys252 is modified to N6-acetyllysine; alternate. Lys252 bears the N6-succinyllysine; alternate mark. N6-acetyllysine occurs at positions 279 and 318. N6-(pyridoxal phosphate)lysine is present on Lys357. Thr381 contributes to the pyridoxal 5'-phosphate binding site. N6-acetyllysine; alternate is present on Lys413. Lys413 is modified (N6-succinyllysine; alternate). Lys452 and Lys470 each carry N6-acetyllysine.

It belongs to the class-III pyridoxal-phosphate-dependent aminotransferase family. In terms of assembly, homodimer; disulfide-linked. Requires pyridoxal 5'-phosphate as cofactor. [2Fe-2S] cluster is required as a cofactor.

The protein resides in the mitochondrion matrix. It carries out the reaction 4-aminobutanoate + 2-oxoglutarate = succinate semialdehyde + L-glutamate. The enzyme catalyses (S)-3-amino-2-methylpropanoate + 2-oxoglutarate = 2-methyl-3-oxopropanoate + L-glutamate. Its function is as follows. Catalyzes the conversion of gamma-aminobutyrate and L-beta-aminoisobutyrate to succinate semialdehyde and methylmalonate semialdehyde, respectively. Can also convert delta-aminovalerate and beta-alanine. This Rattus norvegicus (Rat) protein is 4-aminobutyrate aminotransferase, mitochondrial.